An 86-amino-acid polypeptide reads, in one-letter code: Omega-theraphotoxin-Hhn1f 2 (86 aa).

Residues 1-21 (MKSIVFVALFGLALLAVVCSA) form the signal peptide. Positions 22-50 (SEDAHKELLKEVVRAVVVDKTDAVQAEER) are excised as a propeptide. 3 disulfide bridges follow: Cys52/Cys66, Cys59/Cys71, and Cys65/Cys78.

The protein belongs to the neurotoxin 10 (Hwtx-1) family. 17 (Hntx-9) subfamily. In terms of tissue distribution, expressed by the venom gland.

Its subcellular location is the secreted. Its function is as follows. Ion channel inhibitor. This chain is Omega-theraphotoxin-Hhn1f 2, found in Cyriopagopus hainanus (Chinese bird spider).